Consider the following 399-residue polypeptide: Tryptophan synthase beta chain (399 aa).

Position 92 is an N6-(pyridoxal phosphate)lysine (Lys-92).

The protein belongs to the TrpB family. As to quaternary structure, tetramer of two alpha and two beta chains. It depends on pyridoxal 5'-phosphate as a cofactor.

The enzyme catalyses (1S,2R)-1-C-(indol-3-yl)glycerol 3-phosphate + L-serine = D-glyceraldehyde 3-phosphate + L-tryptophan + H2O. It participates in amino-acid biosynthesis; L-tryptophan biosynthesis; L-tryptophan from chorismate: step 5/5. Functionally, the beta subunit is responsible for the synthesis of L-tryptophan from indole and L-serine. This is Tryptophan synthase beta chain from Thiobacillus denitrificans (strain ATCC 25259 / T1).